Reading from the N-terminus, the 71-residue chain is Protein CYSTEINE-RICH TRANSMEMBRANE MODULE 3 (71 aa).

Residues 30–49 are disordered; sequence VMMKDSPQTVQPPHEGQSKG. A helical membrane pass occupies residues 48–64; it reads KGSGGFLRGCLAAMCCC.

Belongs to the CYSTM1 family. Heterodimers. Interacts with CYSTM7 and WIH1/CYSTM13. As to expression, mostly expressed in leaves and flowers and, to a lower extent, in stems, siliques, shoots and roots.

The protein localises to the cell membrane. The protein resides in the cytoplasm. It is found in the mitochondrion. Negatively regulates salt stress responses and Na(+) homeostasis. Prevents Na(+) efflux, disturbs reactive oxygen species (ROS) homeostasis, and represses the expression of nuclear salt stress-responsive genes. Involved in resistance to abiotic stress. The polypeptide is Protein CYSTEINE-RICH TRANSMEMBRANE MODULE 3 (Arabidopsis thaliana (Mouse-ear cress)).